Reading from the N-terminus, the 435-residue chain is Ribulose bisphosphate carboxylase large chain (435 aa).

Substrate-binding residues include Asn104 and Thr154. Lys156 serves as the catalytic Proton acceptor. Lys158 lines the substrate pocket. Lys182, Asp184, and Glu185 together coordinate Mg(2+). Lys182 is subject to N6-carboxylysine. Catalysis depends on His275, which acts as the Proton acceptor. Substrate is bound by residues Arg276, His308, and Ser360.

Belongs to the RuBisCO large chain family. Type I subfamily. In terms of assembly, heterohexadecamer of 8 large chains and 8 small chains. Mg(2+) serves as cofactor.

Its subcellular location is the plastid. The protein resides in the chloroplast. It carries out the reaction 2 (2R)-3-phosphoglycerate + 2 H(+) = D-ribulose 1,5-bisphosphate + CO2 + H2O. It catalyses the reaction D-ribulose 1,5-bisphosphate + O2 = 2-phosphoglycolate + (2R)-3-phosphoglycerate + 2 H(+). Its function is as follows. RuBisCO catalyzes two reactions: the carboxylation of D-ribulose 1,5-bisphosphate, the primary event in carbon dioxide fixation, as well as the oxidative fragmentation of the pentose substrate in the photorespiration process. Both reactions occur simultaneously and in competition at the same active site. The protein is Ribulose bisphosphate carboxylase large chain of Euglena pisciformis.